A 618-amino-acid polypeptide reads, in one-letter code: Indolepyruvate oxidoreductase subunit IorA (618 aa).

2 consecutive 4Fe-4S ferredoxin-type domains span residues Arg559–Val590 and Gly588–Lys617. 8 residues coordinate [4Fe-4S] cluster: Cys568, Cys571, Cys574, Cys580, Cys597, Cys600, Cys603, and Cys607.

Heterodimer of the IorA and IorB subunits. [4Fe-4S] cluster serves as cofactor.

It catalyses the reaction indole-3-pyruvate + 2 oxidized [2Fe-2S]-[ferredoxin] + CoA = (indol-3-yl)acetyl-CoA + 2 reduced [2Fe-2S]-[ferredoxin] + CO2 + H(+). Its function is as follows. Catalyzes the ferredoxin-dependent oxidative decarboxylation of arylpyruvates. This is Indolepyruvate oxidoreductase subunit IorA (iorA) from Methanothermobacter marburgensis (strain ATCC BAA-927 / DSM 2133 / JCM 14651 / NBRC 100331 / OCM 82 / Marburg) (Methanobacterium thermoautotrophicum).